Consider the following 262-residue polypeptide: tRNA pseudouridine synthase B (262 aa).

Residue Asp-77 is the Nucleophile of the active site.

Belongs to the pseudouridine synthase TruB family. Type 1 subfamily.

It carries out the reaction uridine(55) in tRNA = pseudouridine(55) in tRNA. Its function is as follows. Responsible for synthesis of pseudouridine from uracil-55 in the psi GC loop of transfer RNAs. In Protochlamydia amoebophila (strain UWE25), this protein is tRNA pseudouridine synthase B.